The primary structure comprises 152 residues: Cytochrome c-type biogenesis protein CcmE 2 (152 aa).

The Cytoplasmic portion of the chain corresponds to 1-8 (MNPQRRRR). A helical; Signal-anchor for type II membrane protein transmembrane segment spans residues 9 to 29 (LWLVLALVLAGGLATTLVAMA). The Periplasmic segment spans residues 30-152 (LQRNVAYLYT…HQVAPAKVTQ (123 aa)). 2 residues coordinate heme: His-123 and Tyr-127.

Belongs to the CcmE/CycJ family.

It is found in the cell inner membrane. Functionally, heme chaperone required for the biogenesis of c-type cytochromes. Transiently binds heme delivered by CcmC and transfers the heme to apo-cytochromes in a process facilitated by CcmF and CcmH. In Xanthomonas campestris pv. campestris (strain 8004), this protein is Cytochrome c-type biogenesis protein CcmE 2.